We begin with the raw amino-acid sequence, 154 residues long: Lipoprotein signal peptidase (154 aa).

The next 2 helical transmembrane spans lie at 55–75 (GHMW…IYIM) and 84–104 (LFSI…IDRI). Residues aspartate 111 and aspartate 129 contribute to the active site. A helical membrane pass occupies residues 124-144 (IFNVADAALSVGVVLMLVYVF).

The protein belongs to the peptidase A8 family.

The protein localises to the cell membrane. It carries out the reaction Release of signal peptides from bacterial membrane prolipoproteins. Hydrolyzes -Xaa-Yaa-Zaa-|-(S,diacylglyceryl)Cys-, in which Xaa is hydrophobic (preferably Leu), and Yaa (Ala or Ser) and Zaa (Gly or Ala) have small, neutral side chains.. It functions in the pathway protein modification; lipoprotein biosynthesis (signal peptide cleavage). Its function is as follows. This protein specifically catalyzes the removal of signal peptides from prolipoproteins. The protein is Lipoprotein signal peptidase of Listeria innocua serovar 6a (strain ATCC BAA-680 / CLIP 11262).